Consider the following 534-residue polypeptide: EH domain-containing protein 1 (534 aa).

An N-acetylmethionine modification is found at M1. Positions 55–286 (FDNKPMVLLV…DLFKDIQSLP (232 aa)) constitute a Dynamin-type G domain. A G1 motif region spans residues 65–72 (GQYSTGKT). An ATP-binding site is contributed by 65–72 (GQYSTGKT). The G2 motif stretch occupies residues 91–92 (EP). The G3 motif stretch occupies residues 153 to 156 (DTPG). The stretch at 198–227 (DEFSEVIKALKNHEDKIRVVLNKADQIETQ) forms a coiled coil. The tract at residues 219–222 (NKAD) is G4 motif. K220 lines the ATP pocket. Residue I243 is a region of interest, G5 motif. W258 is a binding site for ATP. Phosphoserine is present on residues S355 and S456. The 89-residue stretch at 444–532 (DKPTYDEIFY…PHLVPPSKRR (89 aa)) folds into the EH domain. The 36-residue stretch at 476-511 (LPNTVLGKIWKLADVDKDGLLDDEEFALANHLIKVK) folds into the EF-hand domain. D489, D491, D493, and E500 together coordinate Ca(2+).

It belongs to the TRAFAC class dynamin-like GTPase superfamily. Dynamin/Fzo/YdjA family. EHD subfamily. As to quaternary structure, homooligomer, and heterooligomer with EHD2, EHD3 and EHD4, ATP-binding is required for heterooligomerization. Interacts (via EH domain) with MICALL1 (via NPF1 motif); the interaction is direct and recruits EHD1 to membranes. Interacts with RAB35; the interaction is indirect through MICALL1 and recruits EHD1 to membranes. Interacts (via EH domain) with PACSIN2 (via NPF motifs); regulates localization to tubular recycling endosome membranes. Interacts with PACSIN1. Interacts with RAB8A. Interacts with FER1L5 (via second C2 domain). Interacts with MYOF. Interacts with ZFYVE20. Interacts (via EH domain) with RAB11FIP2.

The protein resides in the recycling endosome membrane. Its subcellular location is the early endosome membrane. It localises to the cell membrane. It is found in the cell projection. The protein localises to the cilium membrane. ATP- and membrane-binding protein that controls membrane reorganization/tubulation upon ATP hydrolysis. Acts in early endocytic membrane fusion and membrane trafficking of recycling endosomes. Recruited to endosomal membranes upon nerve growth factor stimulation, indirectly regulates neurite outgrowth. Plays a role in myoblast fusion. Involved in the unidirectional retrograde dendritic transport of endocytosed BACE1 and in efficient sorting of BACE1 to axons implicating a function in neuronal APP processing. Plays a role in the formation of the ciliary vesicle (CV), an early step in cilium biogenesis. Proposed to be required for the fusion of distal appendage vesicles (DAVs) to form the CV by recruiting SNARE complex component SNAP29. Is required for recruitment of transition zone proteins CEP290, RPGRIP1L, TMEM67 and B9D2, and of IFT20 following DAV reorganization before Rab8-dependent ciliary membrane extension. Required for the loss of CCP110 form the mother centriole essential for the maturation of the basal body during ciliogenesis. This chain is EH domain-containing protein 1, found in Pongo abelii (Sumatran orangutan).